The primary structure comprises 365 residues: Succinyl-diaminopimelate desuccinylase (365 aa).

His65 provides a ligand contact to Zn(2+). Asp67 is a catalytic residue. Asp96 is a binding site for Zn(2+). Glu126 serves as the catalytic Proton acceptor. Zn(2+) contacts are provided by Glu127, Glu155, and His340.

The protein belongs to the peptidase M20A family. DapE subfamily. In terms of assembly, homodimer. Requires Zn(2+) as cofactor. Co(2+) serves as cofactor.

The enzyme catalyses N-succinyl-(2S,6S)-2,6-diaminopimelate + H2O = (2S,6S)-2,6-diaminopimelate + succinate. The protein operates within amino-acid biosynthesis; L-lysine biosynthesis via DAP pathway; LL-2,6-diaminopimelate from (S)-tetrahydrodipicolinate (succinylase route): step 3/3. Catalyzes the hydrolysis of N-succinyl-L,L-diaminopimelic acid (SDAP), forming succinate and LL-2,6-diaminopimelate (DAP), an intermediate involved in the bacterial biosynthesis of lysine and meso-diaminopimelic acid, an essential component of bacterial cell walls. This chain is Succinyl-diaminopimelate desuccinylase, found in Campylobacter jejuni subsp. jejuni serotype O:23/36 (strain 81-176).